The chain runs to 174 residues: Peptide methionine sulfoxide reductase MsrA (174 aa).

Cys-10 is a catalytic residue.

The protein belongs to the MsrA Met sulfoxide reductase family.

It carries out the reaction L-methionyl-[protein] + [thioredoxin]-disulfide + H2O = L-methionyl-(S)-S-oxide-[protein] + [thioredoxin]-dithiol. It catalyses the reaction [thioredoxin]-disulfide + L-methionine + H2O = L-methionine (S)-S-oxide + [thioredoxin]-dithiol. Has an important function as a repair enzyme for proteins that have been inactivated by oxidation. Catalyzes the reversible oxidation-reduction of methionine sulfoxide in proteins to methionine. The polypeptide is Peptide methionine sulfoxide reductase MsrA (Acinetobacter baumannii (strain SDF)).